The following is a 965-amino-acid chain: Iron-responsive element-binding protein 2 (965 aa).

Residues asparagine 142–cysteine 170 are disordered. [4Fe-4S] cluster contacts are provided by cysteine 514, cysteine 580, and cysteine 583.

Belongs to the aconitase/IPM isomerase family. Requires [4Fe-4S] cluster as cofactor. Ubiquitinated and degraded by the proteasome in presence of high level of iron and oxygen.

Its subcellular location is the cytoplasm. Functionally, RNA-binding protein that binds to iron-responsive elements (IRES), which are stem-loop structures found in the 5'-UTR of ferritin, and delta aminolevulinic acid synthase mRNAs, and in the 3'-UTR of transferrin receptor mRNA. Binding to the IRE element in ferritin results in the repression of its mRNA translation. Binding of the protein to the transferrin receptor mRNA inhibits the degradation of this otherwise rapidly degraded mRNA. This is Iron-responsive element-binding protein 2 (IREB2) from Gallus gallus (Chicken).